The primary structure comprises 305 residues: ATP synthase F(0) complex subunit B2, mitochondrial (305 aa).

The N-terminal 22 residues, 1–22 (MSLSRCLPLGQNARVIIIPARL), are a transit peptide targeting the mitochondrion.

Belongs to the eukaryotic ATPase B chain family. Subunit of the F-type ATPase which has 2 components, CF(1) - the catalytic core - and CF(0) - the membrane proton channel.

Its subcellular location is the mitochondrion. The protein localises to the mitochondrion inner membrane. Mitochondrial membrane ATP synthase (F(1)F(0) ATP synthase or Complex V) produces ATP from ADP in the presence of a proton gradient across the membrane which is generated by electron transport complexes of the respiratory chain. F-type ATPases consist of two structural domains, F(1) - containing the extramembraneous catalytic core, and F(0) - containing the membrane proton channel, linked together by a central stalk and a peripheral stalk. During catalysis, ATP synthesis in the catalytic domain of F(1) is coupled via a rotary mechanism of the central stalk subunits to proton translocation. Part of the complex F(0) domain and the peripheric stalk, which acts as a stator to hold the subunits of the catalytic subcomplexes relative to the rotary elements. Plays a role in somatic development. Does not play a role in germline development. The chain is ATP synthase F(0) complex subunit B2, mitochondrial from Caenorhabditis elegans.